The primary structure comprises 532 residues: MAPSSPRPALPALLVLLGALFPGPGNAQTSVSPPKVILPRGGSVQVTCSTSCDQPDLLGIETPLPKKELLLGGNNWKVYELSNVQEDSQPMCYSNCPDGQSTAKTFLTVYWTPERVELAPLPSWQPVGKDLTLRCQVEGGAPRANLTVVLLRGEKELKREPAVGEPAEVTTTVLVERDHHGANFSCRTELDLRPQGLQLFENTSAPHQLQTFVLPATPPQLVSPRVLEVDTQGTVVCSLDGLFPVLEAQVHLALGDQRLNPTVTYGNDSFSAKASVSVTAEDEGTQRLTCAVILGNQSRETLQTVTIYSFPAPNVILTKPEVSEGTEVTVKCEAHPRAKVTLNGVPAQPVGPRVQLLLKATPEDNGRSFSCSATLEVAGQLIHKNQTRELRVLYGPRLDERDCPGNWTWPENSQQTPMCQASGNPLPELKCLKDGTFPLPVGESVTVTRDLEGTYLCRARSTQGEVTRKVTVNVLSPRYEIVIITVVAAAVIMGTAGLSTYLYNRQRKIRKYRLQQAQKGTPMKPNTQATPP.

Positions 1–27 (MAPSSPRPALPALLVLLGALFPGPGNA) are cleaved as a signal peptide. Residues 28-480 (QTSVSPPKVI…TVNVLSPRYE (453 aa)) are Extracellular-facing. Ig-like C2-type domains follow at residues 41–103 (GGSV…QSTA) and 128–193 (GKDL…LDLR). Intrachain disulfides connect Cys-48-Cys-92, Cys-52-Cys-96, and Cys-135-Cys-186. Residue Asn-145 is glycosylated (N-linked (GlcNAc...) asparagine). Positions 152–154 (RGE) match the Cell attachment site; atypical motif. Asn-183, Asn-202, Asn-267, and Asn-296 each carry an N-linked (GlcNAc...) asparagine glycan. Ig-like C2-type domains are found at residues 230 to 297 (DTQG…LGNQ) and 325 to 378 (GTEV…LEVA). Cysteines 237 and 290 form a disulfide. The cysteines at positions 332 and 371 are disulfide-linked. 2 N-linked (GlcNAc...) asparagine glycosylation sites follow: Asn-385 and Asn-406. 3 cysteine pairs are disulfide-bonded: Cys-403-Cys-419, Cys-419-Cys-457, and Cys-431-Cys-457. An Ig-like C2-type 5 domain is found at 412-464 (NSQQTPMCQASGNPLPELKCLKDGTFPLPVGESVTVTRDLEGTYLCRARSTQG). A helical membrane pass occupies residues 481–503 (IVIITVVAAAVIMGTAGLSTYLY). The Cytoplasmic portion of the chain corresponds to 504–532 (NRQRKIRKYRLQQAQKGTPMKPNTQATPP). Phosphothreonine is present on residues Thr-521 and Thr-530.

It belongs to the immunoglobulin superfamily. ICAM family. In terms of assembly, homodimer. Interacts with MUC1 and promotes cell aggregation in epithelial cells. Interacts with ARHGEF26/SGEF. Interacts (on T cell side) with CD81, CD247 and CD9 at immunological synapses between antigen-presenting cells and T cells. In terms of processing, monoubiquitinated, which is promoted by MARCH9 and leads to endocytosis.

It is found in the membrane. In terms of biological role, ICAM proteins are ligands for the leukocyte adhesion protein LFA-1 (integrin alpha-L/beta-2). During leukocyte trans-endothelial migration, ICAM1 engagement promotes the assembly of endothelial apical cups through ARHGEF26/SGEF and RHOG activation. The polypeptide is Intercellular adhesion molecule 1 (ICAM1) (Pan troglodytes (Chimpanzee)).